We begin with the raw amino-acid sequence, 292 residues long: Inhibitory synaptic factor 1 (292 aa).

Disordered stretches follow at residues 1–25 (MNIR…RERI), 122–186 (SDSV…ERVR), and 198–292 (CDDE…KGKN). A coiled-coil region spans residues 23–63 (ERIRQRMKMVIGQLEDILRELKEVAKELREVVSQIDKLTSD). A compositionally biased stretch (acidic residues) spans 198-214 (CDDEEGDGEEEAAEEEG). The segment covering 263-285 (RNSSTQTVSDKSTQTVLPYTATR) has biased composition (polar residues).

The protein belongs to the INSYN1 family. Interacts with GPHN.

The protein resides in the postsynaptic density. In terms of biological role, component of the protein machinery at the inhibitory synapses, probably acting as a scaffold. Inhibitory synapses dampen neuronal activity through postsynaptic hyperpolarization. This synaptic inhibition is fundamental for the functioning of the central nervous system, shaping and orchestrating the flow of information through neuronal networks to generate a precise neural code. This is Inhibitory synaptic factor 1 from Bos taurus (Bovine).